A 430-amino-acid chain; its full sequence is UDP-N-acetylglucosamine 1-carboxyvinyltransferase (430 aa).

Position 22–23 (22–23) interacts with phosphoenolpyruvate; it reads KN. Residue R102 coordinates UDP-N-acetyl-alpha-D-glucosamine. C126 functions as the Proton donor in the catalytic mechanism. C126 bears the 2-(S-cysteinyl)pyruvic acid O-phosphothioketal mark. UDP-N-acetyl-alpha-D-glucosamine contacts are provided by residues 131–135, 172–175, D317, and I339; these read RPVDL and KVSV.

It belongs to the EPSP synthase family. MurA subfamily.

It localises to the cytoplasm. The enzyme catalyses phosphoenolpyruvate + UDP-N-acetyl-alpha-D-glucosamine = UDP-N-acetyl-3-O-(1-carboxyvinyl)-alpha-D-glucosamine + phosphate. The protein operates within cell wall biogenesis; peptidoglycan biosynthesis. Functionally, cell wall formation. Adds enolpyruvyl to UDP-N-acetylglucosamine. The sequence is that of UDP-N-acetylglucosamine 1-carboxyvinyltransferase from Rhizobium johnstonii (strain DSM 114642 / LMG 32736 / 3841) (Rhizobium leguminosarum bv. viciae).